The chain runs to 327 residues: Geranylgeranyl transferase type-2 subunit alpha (327 aa).

PFTA repeat units follow at residues 44–78, 84–118, 123–157, 163–197, and 207–241; these read YSIEALKKTSELLEKNPEFNAIWNYRRDIIASLAS, FWDKELVFVMMLLKDYPKVYWIWNHRLWVLKHYPT, VWQTELAVVNKLLEQDARNYHGWHYRRIVVGNIES, LDKEEFEYTTIKINNNISNYSAWHQRVQIISRMFQ, and YIRTEISYIINAMFTDAEDQSVWFYIKWFIKNDIV.

This sequence belongs to the protein prenyltransferase subunit alpha family. In terms of assembly, heterodimer of an alpha and a beta subunit.

It carries out the reaction geranylgeranyl diphosphate + L-cysteinyl-[protein] = S-geranylgeranyl-L-cysteinyl-[protein] + diphosphate. Its function is as follows. Catalyzes the transfer of a geranyl-geranyl moiety from geranyl-geranyl pyrophosphate to proteins having the C-terminal -XCC or -XCXC, where both cysteines may become modified. Acts on YPT1 and SEC4. The chain is Geranylgeranyl transferase type-2 subunit alpha (BET4) from Saccharomyces cerevisiae (strain ATCC 204508 / S288c) (Baker's yeast).